The following is a 402-amino-acid chain: Nicotinate phosphoribosyltransferase (402 aa).

Phosphohistidine; by autocatalysis is present on His224.

Belongs to the NAPRTase family. In terms of processing, transiently phosphorylated on a His residue during the reaction cycle. Phosphorylation strongly increases the affinity for substrates and increases the rate of nicotinate D-ribonucleotide production. Dephosphorylation regenerates the low-affinity form of the enzyme, leading to product release.

The enzyme catalyses nicotinate + 5-phospho-alpha-D-ribose 1-diphosphate + ATP + H2O = nicotinate beta-D-ribonucleotide + ADP + phosphate + diphosphate. It functions in the pathway cofactor biosynthesis; NAD(+) biosynthesis; nicotinate D-ribonucleotide from nicotinate: step 1/1. Its function is as follows. Catalyzes the synthesis of beta-nicotinate D-ribonucleotide from nicotinate and 5-phospho-D-ribose 1-phosphate at the expense of ATP. The protein is Nicotinate phosphoribosyltransferase of Neisseria meningitidis serogroup C (strain 053442).